The chain runs to 500 residues: Polyamine oxidase 1 (500 aa).

An N-terminal signal peptide occupies residues 1 to 28 (MSSSPSFGLLAVAALLLALSLAQHGSLA). FAD contacts are provided by residues 42 to 43 (MS), glutamate 63, arginine 71, and 87 to 88 (NW). A substrate-binding site is contributed by glutamate 90. Asparagine 105 carries an N-linked (GlcNAc...) asparagine glycan. Glutamate 198 is a binding site for substrate. The FAD site is built by valine 265, tyrosine 427, and glutamate 458. Position 466 (glycine 466) interacts with substrate. 467–468 (YV) contacts FAD. Cysteine 485 and cysteine 491 are joined by a disulfide.

The protein belongs to the flavin monoamine oxidase family. Monomer. Requires FAD as cofactor.

Its subcellular location is the secreted. The protein resides in the extracellular space. It is found in the apoplast. It localises to the cell wall. The enzyme catalyses spermidine + O2 + H2O = 4-aminobutanal + propane-1,3-diamine + H2O2. It catalyses the reaction N(8)-acetylspermidine + O2 + H2O = 4-acetamidobutanal + propane-1,3-diamine + H2O2. It carries out the reaction spermine + O2 + H2O = N-(3-aminopropyl)-4-aminobutanal + propane-1,3-diamine + H2O2. The catalysed reaction is N(1)-acetylspermine + O2 + H2O = N-(3-acetamidopropyl)-4-aminobutanal + propane-1,3-diamine + H2O2. The protein operates within amine and polyamine degradation; spermine degradation. Functionally, flavoenzyme involved in polyamine back-conversion. Catalyzes the oxidation of the secondary amino group of polyamines, such as spermine, spermidine and their acetyl derivatives. Plays an important role in the regulation of polyamine intracellular concentration. This is Polyamine oxidase 1 from Zea mays (Maize).